A 271-amino-acid polypeptide reads, in one-letter code: Insulin-like growth factor-binding protein 5 (271 aa).

An N-terminal signal peptide occupies residues 1–19 (MVLTAVLLLLAACAGSAQG). The IGFBP N-terminal domain occupies 22–102 (SFVHCEPCDE…LHGRGVCLNE (81 aa)). 6 cysteine pairs are disulfide-bonded: Cys-26–Cys-52, Cys-29–Cys-54, Cys-37–Cys-55, Cys-44–Cys-58, Cys-66–Cys-79, and Cys-73–Cys-99. A compositionally biased stretch (basic and acidic residues) spans 109-121 (AKIERDSREHEEP). Residues 109-129 (AKIERDSREHEEPTTSEMAEE) form a disordered region. Phosphoserine is present on Ser-115. Positions 188–262 (QGPCRRHMEA…MEYVDGDFQC (75 aa)) constitute a Thyroglobulin type-1 domain. Intrachain disulfides connect Cys-191–Cys-218, Cys-229–Cys-240, and Cys-242–Cys-262.

As to quaternary structure, interacts with IGF1; this interaction enhances the growth stimulatory effects of IGF1 on fibroblasts. Interacts with CAV1; this interaction allows trafficking of IGFBP5 from the plasma membrane to the nucleus. Interacts with NCL; this interaction is necessary for IGFBP5 localization to the nucleus.

Its subcellular location is the secreted. The protein localises to the cytoplasm. The protein resides in the nucleus. Its function is as follows. Multifunctional protein that plays a critical role in regulating the availability of IGFs to their receptors and thereby regulates IGF-mediated cellular processes including proliferation, differentiation, and apoptosis in a cell-type specific manner. Increases the cell proliferation of osteoblasts, intestinal smooth muscle cells and neuroblastoma cells. Enhances adhesion and survival of epithelial cells but decreases adhesion of mesenchymal cells. Once secreted, acts as a major mediator of mTORC1-dependent feedback inhibition of IGF1 signaling. Also plays a role in the induction of extracellular matrix (ECM) production and deposition independently of its nuclear translocation and binding to IGFs. Acts itself as a growth factor that can act independently of IGFs to regulate bone formation. Acts as a ligand for the ROR1 receptor which triggers formation of ROR1/HER2 heterodimer to enhance CREB oncogenic signaling. In Bos taurus (Bovine), this protein is Insulin-like growth factor-binding protein 5 (IGFBP5).